A 332-amino-acid polypeptide reads, in one-letter code: UDP-3-O-acylglucosamine N-acyltransferase (332 aa).

The active-site Proton acceptor is the His231.

Belongs to the transferase hexapeptide repeat family. LpxD subfamily. As to quaternary structure, homotrimer.

It catalyses the reaction a UDP-3-O-[(3R)-3-hydroxyacyl]-alpha-D-glucosamine + a (3R)-hydroxyacyl-[ACP] = a UDP-2-N,3-O-bis[(3R)-3-hydroxyacyl]-alpha-D-glucosamine + holo-[ACP] + H(+). The protein operates within bacterial outer membrane biogenesis; LPS lipid A biosynthesis. Catalyzes the N-acylation of UDP-3-O-acylglucosamine using 3-hydroxyacyl-ACP as the acyl donor. Is involved in the biosynthesis of lipid A, a phosphorylated glycolipid that anchors the lipopolysaccharide to the outer membrane of the cell. The protein is UDP-3-O-acylglucosamine N-acyltransferase of Ruthia magnifica subsp. Calyptogena magnifica.